The following is a 902-amino-acid chain: Nitrate reductase [NADPH] (902 aa).

Cysteine 182 serves as a coordination point for Mo-molybdopterin. The Cytochrome b5 heme-binding domain maps to 537–612 (LPLIFADEVA…LKKYCIGRCS (76 aa)). Positions 572 and 595 each coordinate heme. In terms of domain architecture, FAD-binding FR-type spans 637-751 (RTKVPIVLIS…KGPLGHFTYY (115 aa)). Residues 689-692 (RAYT), 708-712 (LIKVY), phenylalanine 713, 725-727 (LFS), and threonine 778 each bind FAD. Residue 872–879 (CMCGPEGM) participates in NADP(+) binding.

The protein belongs to the nitrate reductase family. Homodimer. It depends on FAD as a cofactor. Heme is required as a cofactor. Requires Mo-molybdopterin as cofactor.

The catalysed reaction is nitrite + NADP(+) + H2O = nitrate + NADPH + H(+). Functionally, nitrate reductase is a key enzyme involved in the first step of nitrate assimilation in plants, fungi and bacteria. The polypeptide is Nitrate reductase [NADPH] (NIAA) (Phytophthora infestans (Potato late blight agent)).